Consider the following 142-residue polypeptide: Large ribosomal subunit protein uL13 (142 aa).

The protein belongs to the universal ribosomal protein uL13 family. In terms of assembly, part of the 50S ribosomal subunit.

Functionally, this protein is one of the early assembly proteins of the 50S ribosomal subunit, although it is not seen to bind rRNA by itself. It is important during the early stages of 50S assembly. The sequence is that of Large ribosomal subunit protein uL13 from Pseudoalteromonas atlantica (strain T6c / ATCC BAA-1087).